Reading from the N-terminus, the 290-residue chain is 33 kDa chaperonin (290 aa).

2 disulfide bridges follow: cysteine 235–cysteine 237 and cysteine 268–cysteine 271.

It belongs to the HSP33 family. Under oxidizing conditions two disulfide bonds are formed involving the reactive cysteines. Under reducing conditions zinc is bound to the reactive cysteines and the protein is inactive.

Its subcellular location is the cytoplasm. Functionally, redox regulated molecular chaperone. Protects both thermally unfolding and oxidatively damaged proteins from irreversible aggregation. Plays an important role in the bacterial defense system toward oxidative stress. This Streptococcus pneumoniae serotype 19F (strain G54) protein is 33 kDa chaperonin.